A 503-amino-acid polypeptide reads, in one-letter code: Probable cytosol aminopeptidase (503 aa).

Mn(2+) is bound by residues Lys270 and Asp275. Lys282 is an active-site residue. Asp293, Asp352, and Glu354 together coordinate Mn(2+). Residue Arg356 is part of the active site.

Belongs to the peptidase M17 family. Mn(2+) serves as cofactor.

It localises to the cytoplasm. It catalyses the reaction Release of an N-terminal amino acid, Xaa-|-Yaa-, in which Xaa is preferably Leu, but may be other amino acids including Pro although not Arg or Lys, and Yaa may be Pro. Amino acid amides and methyl esters are also readily hydrolyzed, but rates on arylamides are exceedingly low.. The catalysed reaction is Release of an N-terminal amino acid, preferentially leucine, but not glutamic or aspartic acids.. Its function is as follows. Presumably involved in the processing and regular turnover of intracellular proteins. Catalyzes the removal of unsubstituted N-terminal amino acids from various peptides. In Yersinia pseudotuberculosis serotype O:1b (strain IP 31758), this protein is Probable cytosol aminopeptidase.